A 256-amino-acid chain; its full sequence is UPF0644 protein PB2B4.06 (256 aa).

The chain crosses the membrane as a helical span at residues 34 to 56; sequence GVVYAGVSGTCAAAGYMFGNFVM.

It belongs to the UPF0644 family.

It localises to the mitochondrion membrane. The sequence is that of UPF0644 protein PB2B4.06 from Schizosaccharomyces pombe (strain 972 / ATCC 24843) (Fission yeast).